Consider the following 186-residue polypeptide: LIM domain-containing protein DDB_G0271356 (186 aa).

LIM zinc-binding domains are found at residues 7-67, 68-127, and 128-186; these read PECY…DKFA, PKCQ…KIGF, and LCRH…KLYG.

This chain is LIM domain-containing protein DDB_G0271356, found in Dictyostelium discoideum (Social amoeba).